A 191-amino-acid chain; its full sequence is Ferric nitrobindin-like protein (191 aa).

The short motif at 20–26 (GNWAGAG) is the GXWXGXG element.

It belongs to the nitrobindin family.

This chain is Ferric nitrobindin-like protein, found in Streptomyces avermitilis (strain ATCC 31267 / DSM 46492 / JCM 5070 / NBRC 14893 / NCIMB 12804 / NRRL 8165 / MA-4680).